The primary structure comprises 297 residues: ATP synthase gamma chain (297 aa).

Belongs to the ATPase gamma chain family. F-type ATPases have 2 components, CF(1) - the catalytic core - and CF(0) - the membrane proton channel. CF(1) has five subunits: alpha(3), beta(3), gamma(1), delta(1), epsilon(1). CF(0) has three main subunits: a, b and c.

The protein localises to the cell membrane. In terms of biological role, produces ATP from ADP in the presence of a proton gradient across the membrane. The gamma chain is believed to be important in regulating ATPase activity and the flow of protons through the CF(0) complex. The polypeptide is ATP synthase gamma chain (Beutenbergia cavernae (strain ATCC BAA-8 / DSM 12333 / CCUG 43141 / JCM 11478 / NBRC 16432 / NCIMB 13614 / HKI 0122)).